The primary structure comprises 190 residues: Ribosome hibernation promotion factor (190 aa).

It belongs to the HPF/YfiA ribosome-associated protein family. Long HPF subfamily. As to quaternary structure, interacts with 100S ribosomes.

Its subcellular location is the cytoplasm. Required for dimerization of active 70S ribosomes into 100S ribosomes in stationary phase; 100S ribosomes are translationally inactive and sometimes present during exponential growth. In Rhizobium meliloti (strain 1021) (Ensifer meliloti), this protein is Ribosome hibernation promotion factor.